Reading from the N-terminus, the 392-residue chain is Phosphopentomutase (392 aa).

Positions 13, 286, 291, 327, 328, and 339 each coordinate Mn(2+).

The protein belongs to the phosphopentomutase family. Mn(2+) serves as cofactor.

Its subcellular location is the cytoplasm. The catalysed reaction is 2-deoxy-alpha-D-ribose 1-phosphate = 2-deoxy-D-ribose 5-phosphate. It carries out the reaction alpha-D-ribose 1-phosphate = D-ribose 5-phosphate. The protein operates within carbohydrate degradation; 2-deoxy-D-ribose 1-phosphate degradation; D-glyceraldehyde 3-phosphate and acetaldehyde from 2-deoxy-alpha-D-ribose 1-phosphate: step 1/2. Functionally, isomerase that catalyzes the conversion of deoxy-ribose 1-phosphate (dRib-1-P) and ribose 1-phosphate (Rib-1-P) to deoxy-ribose 5-phosphate (dRib-5-P) and ribose 5-phosphate (Rib-5-P), respectively. The protein is Phosphopentomutase of Oceanobacillus iheyensis (strain DSM 14371 / CIP 107618 / JCM 11309 / KCTC 3954 / HTE831).